Here is a 492-residue protein sequence, read N- to C-terminus: MTVHFPFDNSYAALPENFFARVAPTPVAAPRLIKLNRPLAQRLGLDPDRLDSPEGAEILAGTRVPEGAASIAMAYAGHQFGNFVPQLGDGRAILLGEVIDRDGVRRDIQLKGSGRTPFSRMGDGRAALGPVLREYIVSEAMAALGVPTTRSLAAVLTGERVLRDPIQPGAVLTRIASSHIRVGTFQFFASRGDRDAVRALADHVIARHYPEAAEADSPYLALLEGVIARQADLIARWMMIGFIHGVMNTDNTSIAGETIDYGPCAYMDTFDPKTVFSSIDHMGRYAFGNQPPIALWNLTRLAECLVPLLSDDDDKGVEIAQRALGGFADRFNAAYLAGLAAKLGLATTQPEDTQLAQDFLAAMAKGRADFTLAFRRLSDAAIDPVDLGAVRALFDDPTAFDEWAPRWRSRISLEEQNNTARQTEMREVNPIYIPRNHRVEAVIRAAVDHDDFAPFEEILAVLSNPFREQAKFARYAEPPQLHERVLETFCGT.

ATP is bound by residues glycine 88, glycine 90, arginine 91, lysine 111, aspartate 123, glycine 124, arginine 174, and arginine 181. Residue aspartate 250 is the Proton acceptor of the active site. Residues asparagine 251 and aspartate 260 each contribute to the Mg(2+) site. ATP is bound at residue aspartate 260.

It belongs to the SELO family. It depends on Mg(2+) as a cofactor. Requires Mn(2+) as cofactor.

It catalyses the reaction L-seryl-[protein] + ATP = 3-O-(5'-adenylyl)-L-seryl-[protein] + diphosphate. The catalysed reaction is L-threonyl-[protein] + ATP = 3-O-(5'-adenylyl)-L-threonyl-[protein] + diphosphate. It carries out the reaction L-tyrosyl-[protein] + ATP = O-(5'-adenylyl)-L-tyrosyl-[protein] + diphosphate. The enzyme catalyses L-histidyl-[protein] + UTP = N(tele)-(5'-uridylyl)-L-histidyl-[protein] + diphosphate. It catalyses the reaction L-seryl-[protein] + UTP = O-(5'-uridylyl)-L-seryl-[protein] + diphosphate. The catalysed reaction is L-tyrosyl-[protein] + UTP = O-(5'-uridylyl)-L-tyrosyl-[protein] + diphosphate. In terms of biological role, nucleotidyltransferase involved in the post-translational modification of proteins. It can catalyze the addition of adenosine monophosphate (AMP) or uridine monophosphate (UMP) to a protein, resulting in modifications known as AMPylation and UMPylation. This is Protein nucleotidyltransferase YdiU from Rhodopseudomonas palustris (strain HaA2).